An 89-amino-acid polypeptide reads, in one-letter code: Large ribosomal subunit protein bL27 (89 aa).

The disordered stretch occupies residues 1–24; it reads MAHKKGTGSTRNGRDSNAKRLGVK.

It belongs to the bacterial ribosomal protein bL27 family.

This chain is Large ribosomal subunit protein bL27, found in Synechococcus sp. (strain JA-2-3B'a(2-13)) (Cyanobacteria bacterium Yellowstone B-Prime).